The following is a 94-amino-acid chain: Large ribosomal subunit protein uL23 (94 aa).

Belongs to the universal ribosomal protein uL23 family. In terms of assembly, part of the 50S ribosomal subunit. Contacts protein L29, and trigger factor when it is bound to the ribosome.

One of the early assembly proteins it binds 23S rRNA. One of the proteins that surrounds the polypeptide exit tunnel on the outside of the ribosome. Forms the main docking site for trigger factor binding to the ribosome. The sequence is that of Large ribosomal subunit protein uL23 from Geobacter sulfurreducens (strain ATCC 51573 / DSM 12127 / PCA).